Consider the following 417-residue polypeptide: Probable serine incorporator (417 aa).

10 consecutive transmembrane segments (helical) span residues 25–45, 69–89, 104–124, 131–151, 180–200, 208–228, 239–259, 276–296, 339–359, and 391–411; these read VYVV…YWTF, VVYR…LVMI, GYWP…FFIP, YTWI…VLLI, CVLS…MLVF, INQF…VLSI, SGLF…YSAI, KEST…YSAF, FFHF…TNWA, and VVSS…PILL.

It belongs to the TDE1 family.

The protein resides in the endoplasmic reticulum membrane. Its function is as follows. Enhances the incorporation of serine into phosphatidylserine and sphingolipids. The chain is Probable serine incorporator (serinc) from Dictyostelium discoideum (Social amoeba).